The following is a 359-amino-acid chain: 3-dehydroquinate synthase (359 aa).

Residues 71 to 76, 105 to 109, 129 to 130, Lys-142, and Lys-151 contribute to the NAD(+) site; these read DGEAYK, GVIGD, and TT. Residues Glu-184, His-247, and His-264 each contribute to the Zn(2+) site.

This sequence belongs to the sugar phosphate cyclases superfamily. Dehydroquinate synthase family. Co(2+) is required as a cofactor. The cofactor is Zn(2+). Requires NAD(+) as cofactor.

Its subcellular location is the cytoplasm. It carries out the reaction 7-phospho-2-dehydro-3-deoxy-D-arabino-heptonate = 3-dehydroquinate + phosphate. It functions in the pathway metabolic intermediate biosynthesis; chorismate biosynthesis; chorismate from D-erythrose 4-phosphate and phosphoenolpyruvate: step 2/7. Catalyzes the conversion of 3-deoxy-D-arabino-heptulosonate 7-phosphate (DAHP) to dehydroquinate (DHQ). In Burkholderia mallei (strain NCTC 10247), this protein is 3-dehydroquinate synthase.